We begin with the raw amino-acid sequence, 87 residues long: Small ribosomal subunit protein uS17 (87 aa).

Belongs to the universal ribosomal protein uS17 family. In terms of assembly, part of the 30S ribosomal subunit.

Its function is as follows. One of the primary rRNA binding proteins, it binds specifically to the 5'-end of 16S ribosomal RNA. This chain is Small ribosomal subunit protein uS17, found in Bacillus licheniformis (strain ATCC 14580 / DSM 13 / JCM 2505 / CCUG 7422 / NBRC 12200 / NCIMB 9375 / NCTC 10341 / NRRL NRS-1264 / Gibson 46).